The primary structure comprises 630 residues: ATP synthase subunit alpha (630 aa).

ATP is bound at residue 173–180; sequence GDRQTGKT. Residues 592-630 are disordered; sequence AGGASTAADEDGAGDDEEEAPAPKAKSKNAKSASKAKEK. A compositionally biased stretch (acidic residues) spans 599-611; the sequence is ADEDGAGDDEEEA.

The protein belongs to the ATPase alpha/beta chains family. F-type ATPases have 2 components, CF(1) - the catalytic core - and CF(0) - the membrane proton channel. CF(1) has five subunits: alpha(3), beta(3), gamma(1), delta(1), epsilon(1). CF(0) has three main subunits: a(1), b(2) and c(9-12). The alpha and beta chains form an alternating ring which encloses part of the gamma chain. CF(1) is attached to CF(0) by a central stalk formed by the gamma and epsilon chains, while a peripheral stalk is formed by the delta and b chains.

It localises to the cell inner membrane. It catalyses the reaction ATP + H2O + 4 H(+)(in) = ADP + phosphate + 5 H(+)(out). Its function is as follows. Produces ATP from ADP in the presence of a proton gradient across the membrane. The alpha chain is a regulatory subunit. The chain is ATP synthase subunit alpha from Sorangium cellulosum (strain So ce56) (Polyangium cellulosum (strain So ce56)).